The chain runs to 531 residues: L-aspartate oxidase (531 aa).

Residues 11 to 14 (SGAA), Lys-33, 40 to 47 (NSVYAQGG), 151 to 152 (TA), and Asp-205 each bind FAD. Arg-272 functions as the Proton donor/acceptor in the catalytic mechanism. FAD is bound by residues Glu-353 and 369–370 (SL).

Belongs to the FAD-dependent oxidoreductase 2 family. NadB subfamily. As to quaternary structure, monomer. Homodimer. FAD serves as cofactor.

It localises to the cytoplasm. The catalysed reaction is L-aspartate + O2 = iminosuccinate + H2O2. The enzyme catalyses fumarate + L-aspartate = iminosuccinate + succinate. It participates in cofactor biosynthesis; NAD(+) biosynthesis; iminoaspartate from L-aspartate (oxidase route): step 1/1. Its function is as follows. Catalyzes the oxidation of L-aspartate to iminoaspartate, the first step in the de novo biosynthesis of NAD(+). Can use either oxygen or fumarate as electron acceptors, which allows the enzyme to be functional under aerobic and anaerobic conditions. The protein is L-aspartate oxidase of Bacillus subtilis (strain 168).